Here is a 76-residue protein sequence, read N- to C-terminus: Antimicrobial peptide Smp24 (76 aa).

The first 22 residues, 1–22, serve as a signal peptide directing secretion; sequence MQYKTFLVIFMAYLLVTHEAEA. A propeptide spanning residues 47 to 76 is cleaved from the precursor; the sequence is SKRKRDVEDFFDPYQRDLDLELERLLSQLQ.

The protein belongs to the non-disulfide-bridged peptide (NDBP) superfamily. Medium-length antimicrobial peptide (group 3) family. Expressed by the venom gland.

Its subcellular location is the secreted. It is found in the target cell membrane. Peptide that shows antimicrobial activity, moderate cytolysis on eukaryote cells and interference with DNA synthesis. Has potent activity against Gram-positive bacteria and moderate activity against Gram-negative bacteria, as well as moderate activity against fungi. Acts by inducing bacterial membrane disruption. Uses multiple modes of action depending on the membrane lipid composition. Uses a toroidal pore mechanism against the prokaryotic like membrane and forms hexagonal phase non-lamellar structures in eukaryotic-like membrane. Shows activity against B.subtilis (MIC=4 ug/ml), S.epidermidis (MIC=8 ug/ml), S.aureus (MIC=8 ug/ml), E.coli (MIC=64 ug/ml), K.pneumoniae (MIC=128 ug/ml), P.aeruginosa (MIC=256 ug/ml), and C.albicans (MIC=32 ug/ml). Shows moderate hemolysis activity. The sequence is that of Antimicrobial peptide Smp24 from Scorpio palmatus (Israeli golden scorpion).